Reading from the N-terminus, the 95-residue chain is Large ribosomal subunit protein uL23 (95 aa).

The protein belongs to the universal ribosomal protein uL23 family. As to quaternary structure, part of the 50S ribosomal subunit. Contacts protein L29, and trigger factor when it is bound to the ribosome.

One of the early assembly proteins it binds 23S rRNA. One of the proteins that surrounds the polypeptide exit tunnel on the outside of the ribosome. Forms the main docking site for trigger factor binding to the ribosome. The sequence is that of Large ribosomal subunit protein uL23 from Bacillus subtilis (strain 168).